The sequence spans 74 residues: Putative antitoxin VapB48 (74 aa).

In terms of biological role, possibly the antitoxin component of a type II toxin-antitoxin (TA) system. Its cognate toxin is VapC48 (Potential). The polypeptide is Putative antitoxin VapB48 (vapB48) (Mycobacterium tuberculosis (strain CDC 1551 / Oshkosh)).